We begin with the raw amino-acid sequence, 196 residues long: dITP/XTP pyrophosphatase (196 aa).

10–15 (TSNKGK) is a substrate binding site. Aspartate 71 (proton acceptor) is an active-site residue. A Mg(2+)-binding site is contributed by aspartate 71. Residues serine 72, 156–159 (FGYD), lysine 179, and 184–185 (HR) contribute to the substrate site.

Belongs to the HAM1 NTPase family. In terms of assembly, homodimer. Requires Mg(2+) as cofactor.

The catalysed reaction is XTP + H2O = XMP + diphosphate + H(+). It catalyses the reaction dITP + H2O = dIMP + diphosphate + H(+). It carries out the reaction ITP + H2O = IMP + diphosphate + H(+). Its function is as follows. Pyrophosphatase that catalyzes the hydrolysis of nucleoside triphosphates to their monophosphate derivatives, with a high preference for the non-canonical purine nucleotides XTP (xanthosine triphosphate), dITP (deoxyinosine triphosphate) and ITP. Seems to function as a house-cleaning enzyme that removes non-canonical purine nucleotides from the nucleotide pool, thus preventing their incorporation into DNA/RNA and avoiding chromosomal lesions. This is dITP/XTP pyrophosphatase from Haemophilus ducreyi (strain 35000HP / ATCC 700724).